Consider the following 340-residue polypeptide: MSSTAIVHDDDLMEPTLQSIVNQKTLRWIFVGGKGGVGKTTTSCSLAIQLAKARKSVLLISTDPAHNLSDAFGQKFGKEARLVDGFTNLSAMEVDPNGSLQDLLANGEGQGDDPMAGLGVGNMMQDLAFSIPGVDEAMSFAEVLKQVKSLSYEVIVFDTAPTGHTLRFLQFPTVLEKALAKLSQLSSQFGPMLNSILGARGGLPGGQNLDELLQKMESLRETIGEVNTQFKNPDMTTFVCVCIAEFLSLYETERMIQELTSYQIDTHAIVVNQLLFPKQGSDCEQCNARRKMQKKYLEQIEELYEDFNVVRMPLLVEEVRGKEKLEKFSDMLINPYVPPN.

K34–T41 is an ATP binding site. D63 is a catalytic residue. ATP is bound by residues E245 and N272. Positions 283 and 286 each coordinate Zn(2+).

This sequence belongs to the arsA ATPase family. In terms of assembly, homodimer.

The protein resides in the cytoplasm. Its subcellular location is the endoplasmic reticulum. Functionally, ATPase required for the post-translational delivery of tail-anchored (TA) proteins to the endoplasmic reticulum. Recognizes and selectively binds the transmembrane domain of TA proteins in the cytosol. This complex then targets to the endoplasmic reticulum by membrane-bound receptors, where the tail-anchored protein is released for insertion. This process is regulated by ATP binding and hydrolysis. ATP binding drives the homodimer towards the closed dimer state, facilitating recognition of newly synthesized TA membrane proteins. ATP hydrolysis is required for insertion. Subsequently, the homodimer reverts towards the open dimer state, lowering its affinity for the membrane-bound receptor, and returning it to the cytosol to initiate a new round of targeting. The sequence is that of ATPase get3 (get3) from Emericella nidulans (strain FGSC A4 / ATCC 38163 / CBS 112.46 / NRRL 194 / M139) (Aspergillus nidulans).